Reading from the N-terminus, the 305-residue chain is ATP synthase gamma chain (305 aa).

The protein belongs to the ATPase gamma chain family. As to quaternary structure, F-type ATPases have 2 components, CF(1) - the catalytic core - and CF(0) - the membrane proton channel. CF(1) has five subunits: alpha(3), beta(3), gamma(1), delta(1), epsilon(1). CF(0) has three main subunits: a, b and c.

It localises to the cell membrane. Produces ATP from ADP in the presence of a proton gradient across the membrane. The gamma chain is believed to be important in regulating ATPase activity and the flow of protons through the CF(0) complex. The protein is ATP synthase gamma chain of Streptomyces griseus subsp. griseus (strain JCM 4626 / CBS 651.72 / NBRC 13350 / KCC S-0626 / ISP 5235).